We begin with the raw amino-acid sequence, 503 residues long: uncharacterized protein (503 aa).

The stretch at L437–I465 forms a coiled coil.

The protein belongs to the IIV-6 467R family.

This is an uncharacterized protein from Invertebrate iridescent virus 6 (IIV-6).